Here is a 213-residue protein sequence, read N- to C-terminus: Orotate phosphoribosyltransferase (213 aa).

K26 is a binding site for 5-phospho-alpha-D-ribose 1-diphosphate. 34-35 (FF) contributes to the orotate binding site. 5-phospho-alpha-D-ribose 1-diphosphate contacts are provided by residues 72–73 (YK), R99, K100, K103, H105, and 124–132 (DDVITAGTA). The orotate site is built by T128 and R156.

It belongs to the purine/pyrimidine phosphoribosyltransferase family. PyrE subfamily. As to quaternary structure, homodimer. The cofactor is Mg(2+).

It catalyses the reaction orotidine 5'-phosphate + diphosphate = orotate + 5-phospho-alpha-D-ribose 1-diphosphate. It participates in pyrimidine metabolism; UMP biosynthesis via de novo pathway; UMP from orotate: step 1/2. In terms of biological role, catalyzes the transfer of a ribosyl phosphate group from 5-phosphoribose 1-diphosphate to orotate, leading to the formation of orotidine monophosphate (OMP). This Edwardsiella ictaluri (strain 93-146) protein is Orotate phosphoribosyltransferase.